A 132-amino-acid chain; its full sequence is Small ribosomal subunit protein uS8 (132 aa).

Belongs to the universal ribosomal protein uS8 family. Part of the 30S ribosomal subunit. Contacts proteins S5 and S12.

One of the primary rRNA binding proteins, it binds directly to 16S rRNA central domain where it helps coordinate assembly of the platform of the 30S subunit. In Borrelia duttonii (strain Ly), this protein is Small ribosomal subunit protein uS8.